The sequence spans 61 residues: Small venom protein 1 (61 aa).

The N-terminal stretch at 1–20 is a signal peptide; that stretch reads MRCVAIFLVVICAFVLQALA.

As to expression, expressed by the venom gland.

Its subcellular location is the secreted. The polypeptide is Small venom protein 1 (Pimpla hypochondriaca (Parasitoid wasp)).